The sequence spans 184 residues: FMRFamide-like neuropeptides 3 (184 aa).

A signal peptide spans 1–23 (MISPNHLILLFCVNCAFLVASDA). Positions 24 to 25 (TP) are excised as a propeptide. Residue Phe35 is modified to Phenylalanine amide. The propeptide occupies 39–73 (AIADEMTFEEDGYYPSNVMWKRSTVDSSEPVIRDQ). Phe82, Phe95, Phe111, and Phe126 each carry phenylalanine amide. The disordered stretch occupies residues 90–110 (FGTMRFGKRNPENDTPFGTMR). Residues 130 to 142 (EDGNAPFGTMKFG) constitute a propeptide that is removed on maturation. The disordered stretch occupies residues 150 to 184 (LGTMRFGKRSADDSAPFGTMRFGKRNPLGTMRFGK). Phenylalanine amide is present on residues Phe155, Phe171, and Phe182.

This sequence belongs to the FARP (FMRFamide related peptide) family. As to expression, each flp gene is expressed in a distinct set of neurons. Flp-3 is expressed in the IL1 and PQR neurons.

The protein localises to the secreted. Functionally, FMRFamides and FMRFamide-like peptides are neuropeptides. SAEPFGTMRF-amide inhibits the activity of dissected pharyngeal myogenic muscle system. The polypeptide is FMRFamide-like neuropeptides 3 (Caenorhabditis elegans).